A 175-amino-acid polypeptide reads, in one-letter code: NADH-quinone oxidoreductase subunit I 1 (175 aa).

2 4Fe-4S ferredoxin-type domains span residues 44 to 74 (LNRW…VESA) and 90 to 119 (RVYQ…MIND). [4Fe-4S] cluster is bound by residues C54, C57, C60, C64, C99, C102, C105, and C109.

This sequence belongs to the complex I 23 kDa subunit family. In terms of assembly, NDH-1 is composed of 14 different subunits. Subunits NuoA, H, J, K, L, M, N constitute the membrane sector of the complex. It depends on [4Fe-4S] cluster as a cofactor.

The protein localises to the cell membrane. The catalysed reaction is a quinone + NADH + 5 H(+)(in) = a quinol + NAD(+) + 4 H(+)(out). Functionally, NDH-1 shuttles electrons from NADH, via FMN and iron-sulfur (Fe-S) centers, to quinones in the respiratory chain. The immediate electron acceptor for the enzyme in this species is believed to be menaquinone. Couples the redox reaction to proton translocation (for every two electrons transferred, four hydrogen ions are translocated across the cytoplasmic membrane), and thus conserves the redox energy in a proton gradient. This Mycolicibacterium paratuberculosis (strain ATCC BAA-968 / K-10) (Mycobacterium paratuberculosis) protein is NADH-quinone oxidoreductase subunit I 1.